A 612-amino-acid chain; its full sequence is 1,8-cineole synthase, chloroplastic (612 aa).

A chloroplast-targeting transit peptide spans 1-52; sequence MALVSVAPLASRSCLSKSLISSTHELKPLRRTILPTLRWKSATPSINMCLTT. Mg(2+)-binding residues include Asp-363, Asp-367, and Asp-515. The short motif at 363–367 is the DDXXD motif element; it reads DDIYD.

It belongs to the terpene synthase family. Tpsd subfamily. The cofactor is Mg(2+). Mn(2+) is required as a cofactor.

It localises to the plastid. It is found in the chloroplast. It catalyses the reaction (2E)-geranyl diphosphate + H2O = 1,8-cineole + diphosphate. It participates in terpene metabolism; oleoresin biosynthesis. Functionally, terpene synthase (TPS) involved in the biosynthesis of monoterpene natural products included in conifer oleoresin secretions and volatile emissions; these compounds contribute to biotic and abiotic stress defense against herbivores and pathogens. Catalyzes the conversion of (2E)-geranyl diphosphate (GPP) to 1,8-cineole. The chain is 1,8-cineole synthase, chloroplastic from Picea sitchensis (Sitka spruce).